The following is a 307-amino-acid chain: Thioredoxin reductase (307 aa).

Position 36-43 (36-43 (DNAAPGGK)) interacts with FAD. A disulfide bond links Cys-138 and Cys-141. 278 to 287 (DIRIKDIRQI) is an FAD binding site.

This sequence belongs to the class-II pyridine nucleotide-disulfide oxidoreductase family. In terms of assembly, homodimer. It depends on FAD as a cofactor.

It is found in the cytoplasm. It catalyses the reaction [thioredoxin]-dithiol + NADP(+) = [thioredoxin]-disulfide + NADPH + H(+). The protein is Thioredoxin reductase (trxB) of Mycoplasmopsis pulmonis (strain UAB CTIP) (Mycoplasma pulmonis).